Consider the following 110-residue polypeptide: UPF0122 protein SE_0911 (110 aa).

The protein belongs to the UPF0122 family.

In terms of biological role, might take part in the signal recognition particle (SRP) pathway. This is inferred from the conservation of its genetic proximity to ftsY/ffh. May be a regulatory protein. The polypeptide is UPF0122 protein SE_0911 (Staphylococcus epidermidis (strain ATCC 12228 / FDA PCI 1200)).